The chain runs to 371 residues: Transcriptional regulator of yeast form adherence 2 (371 aa).

The C3H1-type 1 zinc-finger motif lies at Arg16–Pro44. Residues Thr94–Gly107 are compositionally biased toward polar residues. Residues Thr94–Thr194 form a disordered region. Over residues Val115–Asn124 the composition is skewed to acidic residues. The span at Gly132–Thr194 shows a compositional bias: basic and acidic residues. An RRM domain is found at Glu192–Val279. The C3H1-type 2 zinc-finger motif lies at Asp281–Leu309. A disordered region spans residues Glu337 to Ser371. Polar residues predominate over residues Gly355–Ser371.

It is found in the nucleus. Transcription factor required for yeast cell adherence to silicone substrate. This Candida albicans (strain SC5314 / ATCC MYA-2876) (Yeast) protein is Transcriptional regulator of yeast form adherence 2 (TRY2).